We begin with the raw amino-acid sequence, 301 residues long: Heterogeneous nuclear ribonucleoprotein D-like (301 aa).

The segment at 1 to 29 (MEDATEMSGGAEEFAEGSKINASKNQQDD) is disordered. 2 consecutive RRM domains span residues 30 to 112 (GKMF…KGKE) and 115 to 194 (KKVF…QPKE). 2 disordered regions span residues 194-230 (EVYRQQQQQQKGGKSNASGGRGGGRGRGRGQGQNWNQ) and 269-301 (GYGPGYTDYSGQQSTYGKASRGGGNHQNNYQPY). Positions 212–224 (GGRGGGRGRGRGQ) are enriched in gly residues.

The protein localises to the nucleus. It is found in the cytoplasm. Acts as a transcriptional regulator. Binds DNA and RNA. The sequence is that of Heterogeneous nuclear ribonucleoprotein D-like (HNRNPDL) from Gallus gallus (Chicken).